The primary structure comprises 83 residues: Mu-theraphotoxin-Hhn2n (83 aa).

Positions 1 to 21 (MKASMYLALAGLVLLFVVGYA) are cleaved as a signal peptide. A propeptide spanning residues 22 to 48 (SESEEKEFPRELLSKIFAVDDFKGEER) is cleaved from the precursor. 3 disulfide bridges follow: Cys-50-Cys-65, Cys-57-Cys-70, and Cys-64-Cys-77. Leu-81 carries the post-translational modification Leucine amide.

This sequence belongs to the neurotoxin 10 (Hwtx-1) family. 15 (Hntx-3) subfamily. Monomer. Expressed by the venom gland.

The protein resides in the secreted. Its function is as follows. Lethal neurotoxin. Selectively blocks tetrodotoxin-sensitive voltage-gated sodium channels (Nav). Does not affect tetrodotoxin-resistant voltage-gated sodium channels or calcium channels. This chain is Mu-theraphotoxin-Hhn2n, found in Cyriopagopus hainanus (Chinese bird spider).